Consider the following 492-residue polypeptide: GDP-Man:Man(3)GlcNAc(2)-PP-Dol alpha-1,2-mannosyltransferase (492 aa).

Residues 1-19 lie on the Lumenal side of the membrane; the sequence is MAAGERSWCLCKLLRFFYS. The helical transmembrane segment at 20–40 threads the bilayer; sequence LFFPGLIVCGTLCVCLVIVLW. The Cytoplasmic portion of the chain corresponds to 41–233; sequence GIRLLLQRKK…TRNPFLSKVK (193 aa). An intramembrane region (helical) is located at residues 234–254; that stretch reads LIYYYLFAFIYGLVGSCSDVV. At 255–399 the chain is on the cytoplasmic side; the sequence is MVNSSWTLNH…IGLHTMWNEH (145 aa). Positions 400–420 form an intramembrane region, helical; it reads FGIGVVECMAAGTIILAHNSG. Over 421-492 the chain is Cytoplasmic; that stretch reads GPKLDIVVPH…FLSSVEKLFK (72 aa).

Belongs to the glycosyltransferase group 1 family. Glycosyltransferase 4 subfamily.

The protein resides in the endoplasmic reticulum membrane. The catalysed reaction is an alpha-D-Man-(1-&gt;3)-[alpha-D-Man-(1-&gt;6)]-beta-D-Man-(1-&gt;4)-beta-D-GlcNAc-(1-&gt;4)-alpha-D-GlcNAc-diphospho-di-trans,poly-cis-dolichol + 2 GDP-alpha-D-mannose = an alpha-D-Man-(1-&gt;2)-alpha-D-Man-(1-&gt;2)-alpha-D-Man-(1-&gt;3)-[alpha-D-Man-(1-&gt;6)]-beta-D-Man-(1-&gt;4)-beta-D-GlcNAc-(1-&gt;4)-alpha-D-GlcNAc-diphospho-di-trans,poly-cis-dolichol + 2 GDP + 2 H(+). Its pathway is protein modification; protein glycosylation. Its function is as follows. GDP-Man:Man(3)GlcNAc(2)-PP-Dol alpha-1,2-mannosyltransferase that operates in the biosynthetic pathway of dolichol-linked oligosaccharides, the glycan precursors employed in protein asparagine (N)-glycosylation. The assembly of dolichol-linked oligosaccharides begins on the cytosolic side of the endoplasmic reticulum membrane and finishes in its lumen. The sequential addition of sugars to dolichol pyrophosphate produces dolichol-linked oligosaccharides containing fourteen sugars, including two GlcNAcs, nine mannoses and three glucoses. Once assembled, the oligosaccharide is transferred from the lipid to nascent proteins by oligosaccharyltransferases. Catalyzes, on the cytoplasmic face of the endoplasmic reticulum, the addition of the fourth and fifth mannose residues to the dolichol-linked oligosaccharide chain, to produce Man(5)GlcNAc(2)-PP-dolichol core oligosaccharide. Man(5)GlcNAc(2)-PP-dolichol is a substrate for ALG3, the following enzyme in the biosynthetic pathway. In Homo sapiens (Human), this protein is GDP-Man:Man(3)GlcNAc(2)-PP-Dol alpha-1,2-mannosyltransferase.